The sequence spans 259 residues: Haloacid dehalogenase-like hydrolase domain-containing protein 2 (259 aa).

The Mg(2+) site is built by Asp13 and Ser15. Substrate contacts are provided by residues 13 to 15 and 46 to 47; these read DLS and TN. The stretch at 49 to 71 forms a coiled coil; it reads TKESKRDLLERLRKLEFDISEEE. Lys50 carries the post-translational modification N6-succinyllysine. Lys179 contacts substrate. Mg(2+) is bound at residue Asp204.

This sequence belongs to the HAD-like hydrolase superfamily. Mg(2+) serves as cofactor.

This is Haloacid dehalogenase-like hydrolase domain-containing protein 2 (Hdhd2) from Rattus norvegicus (Rat).